Here is a 313-residue protein sequence, read N- to C-terminus: Cytochrome f (313 aa).

An N-terminal signal peptide occupies residues 1 to 30; that stretch reads MRNWSFSKAALTVSLLALSWSPFGPAEVQA. Positions 31, 51, 54, and 55 each coordinate heme. Residues 279–298 form a helical membrane-spanning segment; sequence VQGLIIFFAFVLIAQVFLVL.

Belongs to the cytochrome f family. As to quaternary structure, the 4 large subunits of the cytochrome b6-f complex are cytochrome b6, subunit IV (17 kDa polypeptide, petD), cytochrome f and the Rieske protein, while the 4 small subunits are PetG, PetL, PetM and PetN. The complex functions as a dimer. The cofactor is heme.

It localises to the plastid. Its subcellular location is the chloroplast thylakoid membrane. In terms of biological role, component of the cytochrome b6-f complex, which mediates electron transfer between photosystem II (PSII) and photosystem I (PSI), cyclic electron flow around PSI, and state transitions. The protein is Cytochrome f of Nephroselmis olivacea (Green alga).